Here is a 152-residue protein sequence, read N- to C-terminus: SsrA-binding protein (152 aa).

The protein belongs to the SmpB family.

The protein resides in the cytoplasm. Its function is as follows. Required for rescue of stalled ribosomes mediated by trans-translation. Binds to transfer-messenger RNA (tmRNA), required for stable association of tmRNA with ribosomes. tmRNA and SmpB together mimic tRNA shape, replacing the anticodon stem-loop with SmpB. tmRNA is encoded by the ssrA gene; the 2 termini fold to resemble tRNA(Ala) and it encodes a 'tag peptide', a short internal open reading frame. During trans-translation Ala-aminoacylated tmRNA acts like a tRNA, entering the A-site of stalled ribosomes, displacing the stalled mRNA. The ribosome then switches to translate the ORF on the tmRNA; the nascent peptide is terminated with the 'tag peptide' encoded by the tmRNA and targeted for degradation. The ribosome is freed to recommence translation, which seems to be the essential function of trans-translation. This is SsrA-binding protein from Lactobacillus helveticus (strain DPC 4571).